The primary structure comprises 165 residues: Neurotrophin-3 (165 aa).

A signal peptide spans 1-3 (IQS). Residues 4 to 119 (TSMDQGSLTE…VLNRTSRRKR (116 aa)) constitute a propeptide that is removed on maturation. A glycan (N-linked (GlcNAc...) asparagine) is linked at Asn-112.

This sequence belongs to the NGF-beta family.

Its subcellular location is the secreted. In terms of biological role, seems to promote the survival of visceral and proprioceptive sensory neurons. This chain is Neurotrophin-3 (NTF3), found in Calabaria reinhardtii (Calabar boa).